The following is a 224-amino-acid chain: Large ribosomal subunit protein uL3 (224 aa).

Gln-158 is modified (N5-methylglutamine).

Belongs to the universal ribosomal protein uL3 family. As to quaternary structure, part of the 50S ribosomal subunit. Forms a cluster with proteins L14 and L19. Post-translationally, methylated by PrmB.

Functionally, one of the primary rRNA binding proteins, it binds directly near the 3'-end of the 23S rRNA, where it nucleates assembly of the 50S subunit. The polypeptide is Large ribosomal subunit protein uL3 (Paracidovorax citrulli (strain AAC00-1) (Acidovorax citrulli)).